The primary structure comprises 213 residues: Ribulose-phosphate 3-epimerase (213 aa).

Ser-9 lines the substrate pocket. A divalent metal cation contacts are provided by His-34, Asp-36, and His-66. Asp-36 functions as the Proton acceptor in the catalytic mechanism. Substrate contacts are provided by residues His-66, 139-142 (GFGG), 166-168 (DGG), and 186-187 (GS). Residue Asp-166 participates in a divalent metal cation binding. The Proton donor role is filled by Asp-166.

The protein belongs to the ribulose-phosphate 3-epimerase family. It depends on Co(2+) as a cofactor. Requires Fe(2+) as cofactor. Mn(2+) serves as cofactor. Zn(2+) is required as a cofactor.

The catalysed reaction is D-ribulose 5-phosphate = D-xylulose 5-phosphate. It functions in the pathway carbohydrate degradation; pentose phosphate pathway; D-xylulose 5-phosphate from D-ribulose 5-phosphate (non-oxidative stage): step 1/1. Functionally, catalyzes the reversible epimerization of D-ribulose 5-phosphate to D-xylulose 5-phosphate. The chain is Ribulose-phosphate 3-epimerase (RPE1) from Encephalitozoon cuniculi (strain GB-M1) (Microsporidian parasite).